The chain runs to 393 residues: Sugar efflux transporter A (393 aa).

12 consecutive transmembrane segments (helical) span residues 22-42, 51-71, 82-102, 107-127, 152-172, 174-194, 219-239, 253-273, 287-307, 308-328, 344-364, and 366-386; these read VIAFLTGIAGALQLPTLSLFL, FMVGLFYTGSAVIGIVVSQIL, KTLILQCCLLGALACLLYAWN, VLLFIGVLLSSFGSTANPQLF, ISLSWVIGPPVAFALALGFGF, AMYLTAAVVFVLCGLLVWLLL, LLLFTACTLMWTCNGIYLINM, LAGVMMGTAAGLEIPVMLLAG, LAVIAGLIFYTGLTLLNGSWA, LLALQLLNAIFIGILAGMGML, LFTNTTRVGWIISGSLAGIVA, and VWSYHAGFVIAIAMLAGAAVC.

This sequence belongs to the major facilitator superfamily. Set transporter family.

It localises to the cell inner membrane. Functionally, involved in the efflux of sugars. The physiological role may be the reduction of the intracellular concentration of toxic sugars or sugar metabolites. Transports IPTG, lactose and arabinose. The protein is Sugar efflux transporter A (sotA) of Dickeya chrysanthemi (Pectobacterium chrysanthemi).